We begin with the raw amino-acid sequence, 233 residues long: Ion-translocating oxidoreductase complex subunit E (233 aa).

Helical transmembrane passes span 18 to 38, 39 to 59, 69 to 89, 92 to 112, 128 to 148, and 182 to 202; these read ALVQ…ATNA, LGLG…VSAL, IPIY…LINA, FGLY…CIVI, ALDG…LGAL, and PFLL…LLAG.

It belongs to the NqrDE/RnfAE family. In terms of assembly, the complex is composed of six subunits: RnfA, RnfB, RnfC, RnfD, RnfE and RnfG.

It localises to the cell inner membrane. Part of a membrane-bound complex that couples electron transfer with translocation of ions across the membrane. In Yersinia pestis bv. Antiqua (strain Angola), this protein is Ion-translocating oxidoreductase complex subunit E.